Here is a 242-residue protein sequence, read N- to C-terminus: Type III pantothenate kinase (242 aa).

7–14 (DLGNSRFK) contributes to the ATP binding site. Substrate-binding positions include Y91 and 98–101 (GVDR). Catalysis depends on D100, which acts as the Proton acceptor. T121 lines the ATP pocket. T171 contributes to the substrate binding site.

Belongs to the type III pantothenate kinase family. As to quaternary structure, homodimer. The cofactor is NH4(+). K(+) serves as cofactor.

It localises to the cytoplasm. It carries out the reaction (R)-pantothenate + ATP = (R)-4'-phosphopantothenate + ADP + H(+). It functions in the pathway cofactor biosynthesis; coenzyme A biosynthesis; CoA from (R)-pantothenate: step 1/5. In terms of biological role, catalyzes the phosphorylation of pantothenate (Pan), the first step in CoA biosynthesis. In Xanthomonas campestris pv. campestris (strain B100), this protein is Type III pantothenate kinase.